Reading from the N-terminus, the 192-residue chain is MFYNKMFIHSISGGSSLLSASEVFASAFFSKASSLSSLNLCSRSSDNSFSYFLCVLVSTFLNSLVIIESERDPEPLVGLPTEEGELGSQVTGELAGDDMPKLCLLEFSLLLAFSSSLFSCSNSCNFFSVLLKFEWLFNNLSCNSLLVRVSFSISCTYSARSFSNCLVKKLCASCKSLNAVSSSSNFLEESSS.

A helical; Signal-anchor membrane pass occupies residues 7-29; that stretch reads FIHSISGGSSLLSASEVFASAFF. Residues 51–67 traverse the membrane as a helical segment; sequence YFLCVLVSTFLNSLVII.

It localises to the membrane. This is an uncharacterized protein from Saccharomyces cerevisiae (strain ATCC 204508 / S288c) (Baker's yeast).